The primary structure comprises 449 residues: UDP-N-acetylglucosamine 1-carboxyvinyltransferase (449 aa).

Residues 1–12 (MQVTVNEHDAVE) show a composition bias toward basic and acidic residues. Residues 1–30 (MQVTVNEHDAVERVATATPAGNREAHAHGT) form a disordered region. Position 51 to 52 (51 to 52 (KN)) interacts with phosphoenolpyruvate. UDP-N-acetyl-alpha-D-glucosamine is bound at residue R121. Residue C145 is the Proton donor of the active site. C145 carries the 2-(S-cysteinyl)pyruvic acid O-phosphothioketal modification. Residues 150–154 (RPVDQ), D333, and I355 contribute to the UDP-N-acetyl-alpha-D-glucosamine site.

It belongs to the EPSP synthase family. MurA subfamily.

It is found in the cytoplasm. The enzyme catalyses phosphoenolpyruvate + UDP-N-acetyl-alpha-D-glucosamine = UDP-N-acetyl-3-O-(1-carboxyvinyl)-alpha-D-glucosamine + phosphate. Its pathway is cell wall biogenesis; peptidoglycan biosynthesis. Functionally, cell wall formation. Adds enolpyruvyl to UDP-N-acetylglucosamine. This Burkholderia pseudomallei (strain 1710b) protein is UDP-N-acetylglucosamine 1-carboxyvinyltransferase.